The sequence spans 206 residues: Flavin reductase (NADPH) (206 aa).

Residues Gly-10, Thr-12, Gly-13, Gln-14, Thr-15, Arg-35, Ser-38, and Arg-39 each contribute to the NADP(+) site. Ser-42 bears the Phosphoserine mark. NADP(+) contacts are provided by Asp-54, Val-55, Leu-75, Gly-76, and Arg-78. Phosphoserine is present on Ser-82. Residues Met-87, Cys-109, His-132, His-153, and Ile-154 each coordinate NADP(+). Cys-109 functions as the S-nitroso-cysteine intermediate; for S-nitroso-CoA-dependent nitrosyltransferase activity in the catalytic mechanism. The active-site S-nitroso-cysteine intermediate; for S-nitroso-CoA-dependent nitrosyltransferase activity is Cys-188.

It belongs to the BLVRB family. As to quaternary structure, monomer. Predominantly expressed in liver and erythrocytes. At lower levels in heart, lung, adrenal gland and cerebrum. Expressed in adult red blood cells.

It is found in the cytoplasm. It catalyses the reaction reduced riboflavin + NADP(+) = riboflavin + NADPH + 2 H(+). It carries out the reaction bilirubin IXbeta + NADP(+) = biliverdin IXbeta + NADPH + H(+). The catalysed reaction is FMNH2 + NAD(+) = FMN + NADH + 2 H(+). The enzyme catalyses FMNH2 + NADP(+) = FMN + NADPH + 2 H(+). It catalyses the reaction S-nitroso-CoA + L-cysteinyl-[protein] = S-nitroso-L-cysteinyl-[protein] + CoA. It carries out the reaction L-cysteinyl-[SCAN] + S-nitroso-CoA = S-nitroso-L-cysteinyl-[SCAN] + CoA. The catalysed reaction is S-nitroso-L-cysteinyl-[SCAN] + L-cysteinyl-[protein] = L-cysteinyl-[SCAN] + S-nitroso-L-cysteinyl-[protein]. With respect to regulation, mesobiliverdin acts as a competitive inhibitor for flavin reduction, indicating that flavin and tetrapyrrole substrates compete for the same site. Inhibited by a wide range of xanthene-based drugs, such as phloxine B, erythrosin B, tamibarotene, sulfasalazine, olsalazine, febuxostat, ataluren (PTC124) and deferasirox. In terms of biological role, enzyme that can both act as a NAD(P)H-dependent reductase and a S-nitroso-CoA-dependent nitrosyltransferase. Promotes fetal heme degradation during development. Also expressed in adult tissues, where it acts as a regulator of hematopoiesis, intermediary metabolism (glutaminolysis, glycolysis, TCA cycle and pentose phosphate pathway) and insulin signaling. Has a broad specificity oxidoreductase activity by catalyzing the NAD(P)H-dependent reduction of a variety of flavins, such as riboflavin, FAD or FMN, biliverdins, methemoglobin and PQQ (pyrroloquinoline quinone). Contributes to fetal heme catabolism by catalyzing reduction of biliverdin IXbeta into bilirubin IXbeta in the liver. Biliverdin IXbeta, which constitutes the major heme catabolite in the fetus is not present in adult. Does not reduce bilirubin IXalpha. Can also reduce the complexed Fe(3+) iron to Fe(2+) in the presence of FMN and NADPH. Acts as a protein nitrosyltransferase by catalyzing nitrosylation of cysteine residues of target proteins, such as HMOX2, INSR and IRS1. S-nitroso-CoA-dependent nitrosyltransferase activity is mediated via a 'ping-pong' mechanism: BLVRB first associates with both S-nitroso-CoA and protein substrate, nitric oxide group is then transferred from S-nitroso-CoA to Cys-109 and Cys-188 residues of BLVRB and from S-nitroso-BLVRB to the protein substrate. Inhibits insulin signaling by mediating nitrosylation of INSR and IRS1, leading to their inhibition. This Homo sapiens (Human) protein is Flavin reductase (NADPH).